A 544-amino-acid polypeptide reads, in one-letter code: Chaperonin GroEL (544 aa).

Residues 29-32 (TLGP), 86-90 (DGTTT), G413, 476-478 (NAA), and D492 each bind ATP. The interval 522-544 (PDPNANNNAAAGANPAAGMGGMM) is disordered. Over residues 524-538 (PNANNNAAAGANPAA) the composition is skewed to low complexity.

This sequence belongs to the chaperonin (HSP60) family. In terms of assembly, forms a cylinder of 14 subunits composed of two heptameric rings stacked back-to-back. Interacts with the co-chaperonin GroES.

Its subcellular location is the cytoplasm. It catalyses the reaction ATP + H2O + a folded polypeptide = ADP + phosphate + an unfolded polypeptide.. In terms of biological role, together with its co-chaperonin GroES, plays an essential role in assisting protein folding. The GroEL-GroES system forms a nano-cage that allows encapsulation of the non-native substrate proteins and provides a physical environment optimized to promote and accelerate protein folding. The sequence is that of Chaperonin GroEL from Lacticaseibacillus casei (strain BL23) (Lactobacillus casei).